A 511-amino-acid chain; its full sequence is 2,3-bisphosphoglycerate-independent phosphoglycerate mutase (511 aa).

Mn(2+)-binding residues include aspartate 18 and serine 68. The active-site Phosphoserine intermediate is the serine 68. Substrate is bound by residues histidine 129, 159 to 160 (RD), arginine 191, lysine 197, 261 to 264 (RSDR), and lysine 329. Mn(2+) contacts are provided by aspartate 396, histidine 400, aspartate 437, histidine 438, and histidine 459. Residues 442–464 (ERMTKQAPDGSVRPYGGHTTNPV) form a disordered region.

The protein belongs to the BPG-independent phosphoglycerate mutase family. As to quaternary structure, monomer. It depends on Mn(2+) as a cofactor.

It catalyses the reaction (2R)-2-phosphoglycerate = (2R)-3-phosphoglycerate. Its pathway is carbohydrate degradation; glycolysis; pyruvate from D-glyceraldehyde 3-phosphate: step 3/5. Catalyzes the interconversion of 2-phosphoglycerate and 3-phosphoglycerate. This is 2,3-bisphosphoglycerate-independent phosphoglycerate mutase from Streptomyces coelicolor (strain ATCC BAA-471 / A3(2) / M145).